A 378-amino-acid polypeptide reads, in one-letter code: Alpha-(1,3)-fucosyltransferase fut-5 (378 aa).

At 1 to 7 (MKHNTLR) the chain is on the cytoplasmic side. A helical; Signal-anchor for type II membrane protein membrane pass occupies residues 8–28 (AVFQFSFFIGICTFIMIAGYS). The Lumenal segment spans residues 29–378 (YQINYNQRMG…CDNSFATRFL (350 aa)). Asn44, Asn88, Asn105, Asn143, Asn171, and Asn307 each carry an N-linked (GlcNAc...) asparagine glycan.

Belongs to the glycosyltransferase 10 family. It depends on Ca(2+) as a cofactor. Post-translationally, N-glycosylated.

The protein localises to the golgi apparatus. It is found in the golgi stack membrane. It catalyses the reaction a beta-D-galactosyl-(1-&gt;3)-N-acetyl-beta-D-glucosaminyl derivative + GDP-beta-L-fucose = a beta-D-galactosyl-(1-&gt;3)-[alpha-L-fucosyl-(1-&gt;4)]-N-acetyl-beta-D-glucosaminyl derivative + GDP + H(+). It functions in the pathway protein modification; protein glycosylation. With respect to regulation, inhibited by Cu(2+) and Ni(2+), and to a lesser extent by EDTA, Mn(2+) and Mg(2+). In terms of biological role, catalyzes the addition of fucose in alpha 1-3 linkage to GalNAc-beta-1-&gt;4-GlcNAc-beta-1-&gt;3-Gal-beta-1-&gt;4-Glc (LDNT)acceptor. Unlike fut-1, does not add fucose to Man-alpha-1-&gt;3-(Man-alpha-1-&gt;6)-Man-beta-1-&gt;4-GlcNAc-beta-1-&gt;4-GlcNAc-beta-1-Asn (M3), Man-alpha-1-&gt;3-(Man-alpha-1-&gt;6)-Man-beta-1-&gt;4-GlcNAc-beta-1-&gt;4-(Fuc-alpha-1-&gt;6)-GlcNAc-beta-1-Asn (M3F6) or GlcNAc-beta-1-&gt;2-Man-alpha-1-&gt;3-(GlcNAc-beta-1-&gt;2-Man-alpha-1-&gt;6)-Man-beta-1-4-GlcNAc-beta-1-&gt;4-(Fuc-alpha-1-&gt;6)-GlcNAc-beta-1-Asn (GnM3F6) acceptors. The polypeptide is Alpha-(1,3)-fucosyltransferase fut-5 (Caenorhabditis elegans).